The chain runs to 1037 residues: Presequence protease, mitochondrial (1037 aa).

The N-terminal 28 residues, 1–28 (MWRCGGRQGLCVLRRLSGGHAHHRAWRW), are a transit peptide targeting the mitochondrion. Histidine 104 contributes to the Zn(2+) binding site. Glutamate 107 acts as the Proton acceptor in catalysis. Residue histidine 108 coordinates Zn(2+). Cysteines 119 and 556 form a disulfide. Residue glutamate 180 is part of the active site. Glutamate 205 is a Zn(2+) binding site. Lysine 759 is modified (N6-acetyllysine). Lysine 770 is subject to N6-acetyllysine; alternate. Lysine 770 is modified (N6-succinyllysine; alternate). The segment covering 804 to 814 (GRSKKERRPVR) has biased composition (basic residues). The tract at residues 804-834 (GRSKKERRPVRPHTVEKPVPSSSGGDAHVPH) is disordered. At lysine 849 the chain carries N6-succinyllysine. Lysine 884 carries the post-translational modification N6-acetyllysine. Lysine 946 carries the N6-succinyllysine modification.

This sequence belongs to the peptidase M16 family. PreP subfamily. Monomer and homodimer; homodimerization is induced by binding of the substrate. Zn(2+) serves as cofactor. A disulfide bond locks the enzyme in the closed conformation preventing substrate entry into the catalytic chamber. Widely expressed. Expressed at higher level in muscle and heart compared to brain, pancreas, liver, lung and placenta.

The protein resides in the mitochondrion. It localises to the mitochondrion matrix. Its activity is regulated as follows. Mainly exists in a closed and catalytically competent conformation but a closed-to-open switch allows substrate entry into the catalytic chamber. Substrate binding induces closure and dimerization. A disulfide bond may lock the enzyme in a closed conformation preventing substrate entry into the catalytic chamber, participating in redox regulation of the enzyme. Inhibited by metal-chelating agents. Inhibited by nickel and zinc excess, and slightly activated by manganese. Its function is as follows. Metalloendopeptidase of the mitochondrial matrix that functions in peptide cleavage and degradation rather than in protein processing. Has an ATP-independent activity. Specifically cleaves peptides in the range of 5 to 65 residues. Shows a preference for cleavage after small polar residues and before basic residues, but without any positional preference. Degrades the transit peptides of mitochondrial proteins after their cleavage. Also degrades other unstructured peptides. It is also able to degrade amyloid-beta protein 40, one of the peptides produced by APP processing, when it accumulates in mitochondrion. It is a highly efficient protease, at least toward amyloid-beta protein 40. Cleaves that peptide at a specific position and is probably not processive, releasing digested peptides intermediates that can be further cleaved subsequently. It is also able to degrade amyloid-beta protein 42. The sequence is that of Presequence protease, mitochondrial from Homo sapiens (Human).